A 200-amino-acid chain; its full sequence is Protein GrpE (200 aa).

The span at 1–23 (MEEEIKETSEDKEEENTEAEAVE) shows a compositional bias: acidic residues. The disordered stretch occupies residues 1 to 39 (MEEEIKETSEDKEEENTEAEAVENNEKSEENAGNVEEDE).

Belongs to the GrpE family. Homodimer.

Its subcellular location is the cytoplasm. Functionally, participates actively in the response to hyperosmotic and heat shock by preventing the aggregation of stress-denatured proteins, in association with DnaK and GrpE. It is the nucleotide exchange factor for DnaK and may function as a thermosensor. Unfolded proteins bind initially to DnaJ; upon interaction with the DnaJ-bound protein, DnaK hydrolyzes its bound ATP, resulting in the formation of a stable complex. GrpE releases ADP from DnaK; ATP binding to DnaK triggers the release of the substrate protein, thus completing the reaction cycle. Several rounds of ATP-dependent interactions between DnaJ, DnaK and GrpE are required for fully efficient folding. In Brachyspira hyodysenteriae (strain ATCC 49526 / WA1), this protein is Protein GrpE.